The chain runs to 536 residues: Probable tyrosyl-DNA phosphodiesterase (536 aa).

Catalysis depends on His122, which acts as the Nucleophile. Lys124 serves as a coordination point for substrate. The interval Ser315–Ser318 is interaction with DNA. The active-site Proton donor/acceptor is the His401. Lys403 lines the substrate pocket.

Belongs to the tyrosyl-DNA phosphodiesterase family.

The protein resides in the nucleus. Its function is as follows. DNA repair enzyme that can remove a variety of covalent adducts from DNA through hydrolysis of a 3'-phosphodiester bond, giving rise to DNA with a free 3' phosphate. Catalyzes the hydrolysis of dead-end complexes between DNA and the topoisomerase I active site tyrosine residue. Hydrolyzes 3'-phosphoglycolates on protruding 3' ends on DNA double-strand breaks due to DNA damage by radiation and free radicals. Acts on blunt-ended double-strand DNA breaks and on single-stranded DNA. May have low 3'exonuclease activity and may be able to remove a single nucleoside from the 3'end of DNA and RNA molecules with 3'hydroxyl groups. Has no exonuclease activity towards DNA or RNA with a 3'phosphate. The chain is Probable tyrosyl-DNA phosphodiesterase from Schizosaccharomyces pombe (strain 972 / ATCC 24843) (Fission yeast).